A 321-amino-acid polypeptide reads, in one-letter code: Glycerol-3-phosphate dehydrogenase [NAD(P)+] (321 aa).

Positions 10, 11, 31, 32, 47, and 98 each coordinate NADPH. 3 residues coordinate sn-glycerol 3-phosphate: lysine 98, glycine 125, and serine 127. Alanine 129 contributes to the NADPH binding site. Sn-glycerol 3-phosphate contacts are provided by lysine 177, aspartate 230, serine 240, arginine 241, and asparagine 242. The active-site Proton acceptor is the lysine 177. Residue arginine 241 participates in NADPH binding. Valine 265 and glutamate 267 together coordinate NADPH.

This sequence belongs to the NAD-dependent glycerol-3-phosphate dehydrogenase family.

It localises to the cytoplasm. The catalysed reaction is sn-glycerol 3-phosphate + NAD(+) = dihydroxyacetone phosphate + NADH + H(+). It carries out the reaction sn-glycerol 3-phosphate + NADP(+) = dihydroxyacetone phosphate + NADPH + H(+). It functions in the pathway membrane lipid metabolism; glycerophospholipid metabolism. Catalyzes the reduction of the glycolytic intermediate dihydroxyacetone phosphate (DHAP) to sn-glycerol 3-phosphate (G3P), the key precursor for phospholipid synthesis. The protein is Glycerol-3-phosphate dehydrogenase [NAD(P)+] of Thermotoga sp. (strain RQ2).